The sequence spans 418 residues: Phosphoglycerate kinase (418 aa).

Residues V23, D24, F25, N26, Q39, R40, S63, H64, G66, R67, L122, R123, H170, and R171 each coordinate (2R)-3-phosphoglycerate. G214 serves as a coordination point for ADP. G214 lines the CDP pocket. The AMP site is built by A215 and K216. Residue A215 coordinates ATP. A215 contacts Mg(2+). CDP is bound at residue D219. D219 is a binding site for Mg(2+). An AMP-binding site is contributed by K220. K220 serves as a coordination point for ATP. G238 contacts ADP. G238 contributes to the CDP binding site. The AMP site is built by G239 and G313. ATP contacts are provided by G239 and G313. Positions 338, 340, and 343 each coordinate CDP. Residue F343 participates in ADP binding. Residue E344 coordinates AMP. Positions 344, 375, and 376 each coordinate ATP. Position 375 (D375) interacts with Mg(2+).

Belongs to the phosphoglycerate kinase family. Monomer. Requires Mg(2+) as cofactor.

The protein localises to the cytoplasm. The protein resides in the mitochondrion. The catalysed reaction is (2R)-3-phosphoglycerate + ATP = (2R)-3-phospho-glyceroyl phosphate + ADP. Its pathway is carbohydrate degradation; glycolysis; pyruvate from D-glyceraldehyde 3-phosphate: step 2/5. Functionally, catalyzes one of the two ATP producing reactions in the glycolytic pathway via the reversible conversion of 1,3-diphosphoglycerate to 3-phosphoglycerate. Both L- and D- forms of purine and pyrimidine nucleotides can be used as substrates, but the activity is much lower on pyrimidines. Negatively regulates the biosynthesis of acetyl-CoA from pyruvate in the mitochondrion. This chain is Phosphoglycerate kinase (pgk-1), found in Neurospora crassa (strain ATCC 24698 / 74-OR23-1A / CBS 708.71 / DSM 1257 / FGSC 987).